A 26-amino-acid chain; its full sequence is GIWGTLAKIGIKAVPRVISMLKKKKQ.

In terms of tissue distribution, expressed by the venom gland.

It localises to the secreted. It is found in the target cell membrane. Its function is as follows. Has a broad spectrum of activity against both Gram-positive and Gram-negative bacteria and S.cerevisiae. Has insecticidal and hemolytic activities. May act by disrupting the integrity of the bacterial cell membrane. The polypeptide is M-poneritoxin-Ng1c (Neoponera goeldii (Ponerine ant)).